The sequence spans 90 residues: UPF0298 protein BLi01717/BL02989 (90 aa).

This sequence belongs to the UPF0298 family.

Its subcellular location is the cytoplasm. The chain is UPF0298 protein BLi01717/BL02989 from Bacillus licheniformis (strain ATCC 14580 / DSM 13 / JCM 2505 / CCUG 7422 / NBRC 12200 / NCIMB 9375 / NCTC 10341 / NRRL NRS-1264 / Gibson 46).